A 780-amino-acid chain; its full sequence is ATP-dependent 6-phosphofructokinase, liver type (780 aa).

At Ala-2 the chain carries N-acetylalanine. Residues 2 to 390 form an N-terminal catalytic PFK domain 1 region; it reads AAVDLEKLRA…NWNIYKLLAH (389 aa). ATP is bound by residues Gly-25, 88-89, and 118-121; these read RC and GDGS. Mg(2+) is bound at residue Asp-119. Residues 164–166, Arg-201, 208–210, Glu-264, Arg-292, and 298–301 each bind substrate; these read SID, MGR, and HVQR. Asp-166 serves as the catalytic Proton acceptor. Ser-377 bears the Phosphoserine mark. Positions 391-400 are interdomain linker; sequence QKPPKEKSNF. The tract at residues 401-780 is C-terminal regulatory PFK domain 2; sequence SLAILNVGAP…RRTLSMDKGF (380 aa). Beta-D-fructose 2,6-bisphosphate is bound by residues Arg-470, 527 to 531, Arg-565, 572 to 574, and Glu-628; these read TISNN and MGG. A glycan (O-linked (GlcNAc) serine) is linked at Ser-529. A Phosphotyrosine modification is found at Tyr-640. Residues Arg-654, 660–663, and Arg-734 each bind beta-D-fructose 2,6-bisphosphate; that span reads HLQQ. Ser-775 is modified (phosphoserine).

Belongs to the phosphofructokinase type A (PFKA) family. ATP-dependent PFK group I subfamily. Eukaryotic two domain clade 'E' sub-subfamily. Homo- and heterotetramers. Phosphofructokinase (PFK) enzyme functions as a tetramer composed of different combinations of 3 types of subunits, called PFKM (where M stands for Muscle), PFKL (Liver) and PFKP (Platelet). The composition of the PFK tetramer differs according to the tissue type it is present in. In muscles, it is composed of 4 PFKM subunits (also called M4). In the liver, the predominant form is a tetramer of PFKL subunits (L4). In erythrocytes, both PFKM and PFKL subunits randomly tetramerize to form M4, L4 and other combinations (ML3, M2L2, M3L). The kinetic and regulatory properties of the tetrameric enzyme are dependent on the subunit composition, hence can vary across tissues. It depends on Mg(2+) as a cofactor. Post-translationally, glcNAcylation at Ser-529 by OGT decreases enzyme activity, leading to redirect glucose flux through the oxidative pentose phosphate pathway. Glycosylation is stimulated by both hypoxia and glucose deprivation.

Its subcellular location is the cytoplasm. The enzyme catalyses beta-D-fructose 6-phosphate + ATP = beta-D-fructose 1,6-bisphosphate + ADP + H(+). The protein operates within carbohydrate degradation; glycolysis; D-glyceraldehyde 3-phosphate and glycerone phosphate from D-glucose: step 3/4. With respect to regulation, allosterically activated by ADP, AMP, or fructose 2,6-bisphosphate, and allosterically inhibited by ATP or citrate. GlcNAcylation by OGT overcomes allosteric regulation. In terms of biological role, catalyzes the phosphorylation of D-fructose 6-phosphate to fructose 1,6-bisphosphate by ATP, the first committing step of glycolysis. Negatively regulates the phagocyte oxidative burst in response to bacterial infection by controlling cellular NADPH biosynthesis and NADPH oxidase-derived reactive oxygen species. Upon macrophage activation, drives the metabolic switch toward glycolysis, thus preventing glucose turnover that produces NADPH via pentose phosphate pathway. The protein is ATP-dependent 6-phosphofructokinase, liver type of Homo sapiens (Human).